The chain runs to 214 residues: MVGKLITFEGPDGAGKTSALEAVVARLQKEVSQEIVVTREPGGNPISEQIRQIILDVKNTAMDDRTEALLYAAARRQHIVEKIQPALAADKLVICDRFVDSSIAYQGAGRGIGEEAVAQMNLFATDGLTPDLTLYLDVPSEVGLARIKQHRQNQYDRLDQEKLAFHQKVRQSYLKLAQAHPDRIKTIDASQPLEAVVTQCLQVIAQANLHLFEV.

An ATP-binding site is contributed by 10-17 (GPDGAGKT).

Belongs to the thymidylate kinase family.

The enzyme catalyses dTMP + ATP = dTDP + ADP. Its function is as follows. Phosphorylation of dTMP to form dTDP in both de novo and salvage pathways of dTTP synthesis. This is Thymidylate kinase from Latilactobacillus sakei subsp. sakei (strain 23K) (Lactobacillus sakei subsp. sakei).